The primary structure comprises 118 residues: MRVKRAVHAKKKRKKFLKEAKGYRGALSRRYKLAKQMYIRSKWYSYVGRKIKKRDMRKLWITRINIAARNEGLKYSEFIHGLKLAGVSINRKMLSELAVNDPEAFKEYVRIAKEALAS.

Belongs to the bacterial ribosomal protein bL20 family.

Binds directly to 23S ribosomal RNA and is necessary for the in vitro assembly process of the 50S ribosomal subunit. It is not involved in the protein synthesizing functions of that subunit. This Thermotoga neapolitana (strain ATCC 49049 / DSM 4359 / NBRC 107923 / NS-E) protein is Large ribosomal subunit protein bL20.